Reading from the N-terminus, the 210-residue chain is Syntaxin-binding protein 6 (210 aa).

At serine 2 the chain carries N-acetylserine. A v-SNARE coiled-coil homology domain is found at 151 to 210 (GNSILHSAADSVTSAVQKASQALNERGERLGRAEEKTEDMKNSAQQFAETAHKLAMKHKC).

In terms of assembly, part of a ternary complex containing SNAP25 and STX1A that can be dissociated by NAPA and NSF. Interacts with STX4A.

Its subcellular location is the cytoplasm. It localises to the membrane. Its function is as follows. Forms non-fusogenic complexes with SNAP25 and STX1A and may thereby modulate the formation of functional SNARE complexes and exocytosis. The chain is Syntaxin-binding protein 6 (Stxbp6) from Mus musculus (Mouse).